Reading from the N-terminus, the 545-residue chain is Glutamyl-tRNA(Gln) amidotransferase subunit B-1, chloroplastic/mitochondrial (545 aa).

The protein belongs to the GatB/GatE family. GatB subfamily. In terms of assembly, subunit of the heterotrimeric GatCAB amidotransferase (AdT) complex, composed of A, B and C subunits.

Its subcellular location is the mitochondrion. The protein localises to the plastid. The protein resides in the chloroplast. It catalyses the reaction L-glutamyl-tRNA(Gln) + L-glutamine + ATP + H2O = L-glutaminyl-tRNA(Gln) + L-glutamate + ADP + phosphate + H(+). Functionally, allows the formation of correctly charged Gln-tRNA(Gln) through the transamidation of misacylated Glu-tRNA(Gln) in chloroplasts and mitochondria. The reaction takes place in the presence of glutamine and ATP through an activated gamma-phospho-Glu-tRNA(Gln). In Micromonas pusilla (strain CCMP1545) (Picoplanktonic green alga), this protein is Glutamyl-tRNA(Gln) amidotransferase subunit B-1, chloroplastic/mitochondrial.